The primary structure comprises 494 residues: uncharacterized protein (494 aa).

The protein belongs to the TPP enzyme family.

This is an uncharacterized protein from Methanocaldococcus jannaschii (strain ATCC 43067 / DSM 2661 / JAL-1 / JCM 10045 / NBRC 100440) (Methanococcus jannaschii).